We begin with the raw amino-acid sequence, 589 residues long: PTS system mannitol-specific EIICB component (589 aa).

Topologically, residues 1–25 are cytoplasmic; that stretch reads MEEKVSLKVRVQKLGTSLSNMVMPN. The region spanning 14 to 347 is the PTS EIIC type-2 domain; the sequence is LGTSLSNMVM…LHADKSTEDS (334 aa). A helical membrane pass occupies residues 26–47; that stretch reads IGAFIAWGVLTALFIADGYLPN. Residues 48–51 lie on the Extracellular side of the membrane; it reads EQLA. The chain crosses the membrane as a helical span at residues 52-72; sequence TVVGPMLTYLLPILIGYTGGY. The Cytoplasmic segment spans residues 73-135; the sequence is MIHGQRGAVV…PGFEMLVNNF (63 aa). Residues 136-157 traverse the membrane as a helical segment; that stretch reads SAGLVGFALLLLAFYAIGPVVS. Residues 158–166 lie on the Extracellular side of the membrane; the sequence is TLTGAVGNG. A helical membrane pass occupies residues 167 to 187; it reads VEAIVNARLLPMANIIIEPAK. At 188-274 the chain is on the cytoplasmic side; sequence VLFLNNALNH…VMMKPTLFLA (87 aa). A helical transmembrane segment spans residues 275–294; the sequence is AMAGGISGTFTFQLLDAGLK. The Extracellular segment spans residues 295 to 316; sequence SPASPGSIIAIIATAPKGVWPH. The chain crosses the membrane as a helical span at residues 317–338; it reads LNVLLGVLVAAVVSFLVAALIL. The Cytoplasmic segment spans residues 339 to 589; the sequence is HADKSTEDSL…YDKMAARMYK (251 aa). A PTS EIIB type-2 domain is found at 381-476; it reads EKIIFACDAG…SLTGASPIAE (96 aa). The active-site Phosphocysteine intermediate; for EIIB activity is the C387. At C387 the chain carries Phosphocysteine; by EIIA.

Homodimer.

It localises to the cell membrane. It catalyses the reaction D-mannitol(out) + N(pros)-phospho-L-histidyl-[protein] = D-mannitol 1-phosphate(in) + L-histidyl-[protein]. Its function is as follows. The phosphoenolpyruvate-dependent sugar phosphotransferase system (sugar PTS), a major carbohydrate active transport system, catalyzes the phosphorylation of incoming sugar substrates concomitantly with their translocation across the cell membrane. The enzyme II CmtAB PTS system is involved in D-mannitol transport. In Streptococcus pneumoniae serotype 4 (strain ATCC BAA-334 / TIGR4), this protein is PTS system mannitol-specific EIICB component (mtlA).